Reading from the N-terminus, the 137-residue chain is Large ribosomal subunit protein uL16c (137 aa).

Belongs to the universal ribosomal protein uL16 family. In terms of assembly, part of the 50S ribosomal subunit.

The protein localises to the plastid. This Aneura mirabilis (Parasitic liverwort) protein is Large ribosomal subunit protein uL16c.